The chain runs to 140 residues: MPLPEPSEQEGESVKASQEPSPKPGTEVIPAAPRKPRKFSKLVLLTASKDSTKVAGAKRKGVHCVMSLGVPGPATLAKALLQTHPEAQRAIEAAPQEPEQKRSRQDPGTDRTEDSGLAAGPPEAAGENFAPCSVAPGKSL.

Disordered regions lie at residues M1–F39 and H84–L140. S21 carries the phosphoserine modification. Residues P98–D114 are compositionally biased toward basic and acidic residues. The segment covering A118–E127 has biased composition (low complexity).

This is FLYWCH family member 2 (FLYWCH2) from Homo sapiens (Human).